We begin with the raw amino-acid sequence, 270 residues long: MTLKIGIVGSGGRMGRQLIQAVYHTEGVELGAAFERVGSSLVGTDAGELAGIGRIGIKVTDNLTQEKGNFDILIDFTRPEGTIQHLAFCVEQHKNIVIGTTGFDDQSKQAIQQAAQNIAIVFASNYSVGVNLVFKLLEKAAKVMGDYCDIEIIEAHHRHKVDAPSGTALSMGEHIAKTLGRDLKTHGVFSREGITGERKPDEIGFSTIRAADVVGEHTVWFADIGERVEISHKASSRMTFANGAVRAAKWLSTKQEGLFDMTDVLDLNNL.

NAD(+)-binding positions include 9–14 (GSGGRM) and Glu-35. Arg-36 contributes to the NADP(+) binding site. NAD(+)-binding positions include 99–101 (GTT) and 123–126 (ASNY). His-156 functions as the Proton donor/acceptor in the catalytic mechanism. His-157 lines the (S)-2,3,4,5-tetrahydrodipicolinate pocket. Lys-160 serves as the catalytic Proton donor. Position 166–167 (166–167 (GT)) interacts with (S)-2,3,4,5-tetrahydrodipicolinate.

The protein belongs to the DapB family.

It is found in the cytoplasm. It catalyses the reaction (S)-2,3,4,5-tetrahydrodipicolinate + NAD(+) + H2O = (2S,4S)-4-hydroxy-2,3,4,5-tetrahydrodipicolinate + NADH + H(+). The enzyme catalyses (S)-2,3,4,5-tetrahydrodipicolinate + NADP(+) + H2O = (2S,4S)-4-hydroxy-2,3,4,5-tetrahydrodipicolinate + NADPH + H(+). It participates in amino-acid biosynthesis; L-lysine biosynthesis via DAP pathway; (S)-tetrahydrodipicolinate from L-aspartate: step 4/4. Catalyzes the conversion of 4-hydroxy-tetrahydrodipicolinate (HTPA) to tetrahydrodipicolinate. This Histophilus somni (strain 2336) (Haemophilus somnus) protein is 4-hydroxy-tetrahydrodipicolinate reductase.